The sequence spans 72 residues: Prokaryotic ubiquitin-like protein Pup (72 aa).

Gly residues predominate over residues 1-10 (MATRDSGGGQ). The tract at residues 1–41 (MATRDSGGGQQRADRRAEEIDDVATEDTSASDLKERHEKLS) is disordered. A coiled-coil region spans residues 27–61 (DTSASDLKERHEKLSEDVDSLLDEIDDVLEENAEE). Residues 28–66 (TSASDLKERHEKLSEDVDSLLDEIDDVLEENAEEFVKGY) form an ARC ATPase binding region. A compositionally biased stretch (basic and acidic residues) spans 32–41 (DLKERHEKLS). Deamidated glutamine is present on glutamine 72. Glutamine 72 participates in a covalent cross-link: Isoglutamyl lysine isopeptide (Gln-Lys) (interchain with K-? in acceptor proteins).

This sequence belongs to the prokaryotic ubiquitin-like protein family. In terms of assembly, strongly interacts with the proteasome-associated ATPase ARC through a hydrophobic interface; the interacting region of Pup lies in its C-terminal half. There is one Pup binding site per ARC hexamer ring. Post-translationally, is modified by deamidation of its C-terminal glutamine to glutamate by the deamidase Dop, a prerequisite to the subsequent pupylation process.

Its pathway is protein degradation; proteasomal Pup-dependent pathway. In terms of biological role, protein modifier that is covalently attached to lysine residues of substrate proteins, thereby targeting them for proteasomal degradation. The tagging system is termed pupylation. This chain is Prokaryotic ubiquitin-like protein Pup, found in Frankia casuarinae (strain DSM 45818 / CECT 9043 / HFP020203 / CcI3).